A 158-amino-acid chain; its full sequence is D-aminoacyl-tRNA deacylase (158 aa).

A Gly-cisPro motif, important for rejection of L-amino acids motif is present at residues 138–139 (GP).

The protein belongs to the DTD family. In terms of assembly, homodimer.

It localises to the cytoplasm. It carries out the reaction glycyl-tRNA(Ala) + H2O = tRNA(Ala) + glycine + H(+). The enzyme catalyses a D-aminoacyl-tRNA + H2O = a tRNA + a D-alpha-amino acid + H(+). An aminoacyl-tRNA editing enzyme that deacylates mischarged D-aminoacyl-tRNAs. Hydrolyzes correctly charged, achiral, glycyl-tRNA(Gly). Deacylates mischarged endogenous and E.coli glycyl-tRNA(Ala), protecting cells against glycine mischarging by AlaRS. Acts via tRNA-based rather than protein-based catalysis; rejects L-amino acids rather than detecting D-amino acids in the active site. By recycling D-aminoacyl-tRNA to D-amino acids and free tRNA molecules, this enzyme counteracts the toxicity associated with the formation of D-aminoacyl-tRNA entities in vivo and helps enforce protein L-homochirality. This chain is D-aminoacyl-tRNA deacylase, found in Drosophila melanogaster (Fruit fly).